The chain runs to 386 residues: 2,3-diketo-5-methylthiopentyl-1-phosphate enolase (386 aa).

The Proton acceptor role is filled by lysine 85. Substrate is bound by residues lysine 131, 157–160 (KDDE), histidine 248, glycine 316, and 338–339 (GT). The Mg(2+) site is built by lysine 157, aspartate 159, and glutamate 160. An N6-carboxylysine modification is found at lysine 157.

Belongs to the RuBisCO large chain family. Type IV subfamily. As to quaternary structure, homodimer. Mg(2+) serves as cofactor.

It carries out the reaction 5-methylsulfanyl-2,3-dioxopentyl phosphate = 2-hydroxy-5-methylsulfanyl-3-oxopent-1-enyl phosphate. It participates in amino-acid biosynthesis; L-methionine biosynthesis via salvage pathway; L-methionine from S-methyl-5-thio-alpha-D-ribose 1-phosphate: step 3/6. Functionally, catalyzes the enolization of 2,3-diketo-5-methylthiopentyl-1-phosphate (DK-MTP-1-P) into 2-hydroxy-3-keto-5-methylthiopentenyl-1-phosphate (HK-MTPenyl-1-P). The polypeptide is 2,3-diketo-5-methylthiopentyl-1-phosphate enolase (Microcystis aeruginosa (strain NIES-843 / IAM M-2473)).